The following is a 983-amino-acid chain: Probable beta-galactosidase C (983 aa).

Residues 1–23 form the signal peptide; that stretch reads MRIFSFLFLLLLGILTGQGLVSG. Substrate contacts are provided by Tyr82, Asn127, Ala128, Glu129, and Asn187. The Proton donor role is filled by Glu188. N-linked (GlcNAc...) asparagine glycosylation is present at Asn197. Position 251 (Tyr251) interacts with substrate. A disulfide bond links Cys257 and Cys304. A glycan (N-linked (GlcNAc...) asparagine) is linked at Asn276. Residue Glu287 is the Nucleophile of the active site. Tyr353 serves as a coordination point for substrate. Asn391, Asn434, Asn466, Asn516, Asn601, Asn676, Asn714, Asn719, and Asn804 each carry an N-linked (GlcNAc...) asparagine glycan.

Belongs to the glycosyl hydrolase 35 family.

The protein localises to the secreted. It carries out the reaction Hydrolysis of terminal non-reducing beta-D-galactose residues in beta-D-galactosides.. Functionally, cleaves beta-linked terminal galactosyl residues from gangliosides, glycoproteins, and glycosaminoglycans. The polypeptide is Probable beta-galactosidase C (lacC) (Neosartorya fischeri (strain ATCC 1020 / DSM 3700 / CBS 544.65 / FGSC A1164 / JCM 1740 / NRRL 181 / WB 181) (Aspergillus fischerianus)).